A 317-amino-acid chain; its full sequence is Zinc transporter ZIP3 (317 aa).

Topologically, residues 1–3 (MTK) are extracellular. A helical transmembrane segment spans residues 4-24 (LLVAKVLCMVGVFFFMLLGSL). At 25-42 (LPVKVIEADLEKAHRSKK) the chain is on the cytoplasmic side. The chain crosses the membrane as a helical span at residues 43-63 (VLSLCNTFGGGVFLATCFNAL). Residues 64–85 (LPAVRDKLQQVLSLGHISTDYP) are Extracellular-facing. Residues 86 to 106 (LAETLMMVGFFLTVFVEQLVL) traverse the membrane as a helical segment. Residues 107–172 (TFRRERPPFI…RELGRPGPLR (66 aa)) lie on the Cytoplasmic side of the membrane. Serine 125 and serine 129 each carry phosphoserine. The chain crosses the membrane as a helical span at residues 173-193 (LLSLVFALSAHSVFEGLALGL). The Extracellular portion of the chain corresponds to 194 to 199 (QEEGER). A helical membrane pass occupies residues 200–220 (VVSLFVGVAIHETLVAVALGI). Over 221-232 (SMARSAVPLRDA) the chain is Cytoplasmic. A helical membrane pass occupies residues 233–253 (AKLAVTVSAMIPVGIGLGLGI). At 254–265 (ESARSVASSVAS) the chain is on the extracellular side. A helical membrane pass occupies residues 266–286 (ALLQGLAGGTFLFVTFLEILA). The Cytoplasmic segment spans residues 287-294 (KELEERSE). Residues 295 to 315 (QLLKVLFLVLGYAVLAGMVFL) traverse the membrane as a helical segment. Residues 316–317 (KW) lie on the Extracellular side of the membrane.

Belongs to the ZIP transporter (TC 2.A.5) family. In terms of tissue distribution, highly expressed in the testes. Highly expressed in dentate gyrus granule cells of the hippocampus. Expressed in the mammary gland.

The protein localises to the cell membrane. It is found in the apical cell membrane. The catalysed reaction is Zn(2+)(in) = Zn(2+)(out). In terms of biological role, transporter for the divalent cation Zn(2+). Mediates the influx of Zn(2+) into cells from extracellular space. Controls Zn(2+) accumulation into dentate gyrus granule cells in the hippocampus. Mediates Zn(2+) reuptake from the secreted milk within the alveolar lumen. The sequence is that of Zinc transporter ZIP3 (Slc39a3) from Mus musculus (Mouse).